The chain runs to 131 residues: MKKHGVLNSEIASVLASLGHTDTIVIADCGLPIPAGVKRIDLAVEIGKPSFLDVLQVVADDMAIEKVTLAEEVINNNAEVNKEIELKLIEPAFEYVCHEQFKEHTKKAKAIIRTGEATPYANVILHAGVIF.

His-20 functions as the Proton donor in the catalytic mechanism. Residues Asp-28, His-98, and 120–122 (YAN) contribute to the substrate site.

Belongs to the RbsD / FucU family. RbsD subfamily. In terms of assembly, homodecamer.

The protein resides in the cytoplasm. It carries out the reaction beta-D-ribopyranose = beta-D-ribofuranose. It functions in the pathway carbohydrate metabolism; D-ribose degradation; D-ribose 5-phosphate from beta-D-ribopyranose: step 1/2. Functionally, catalyzes the interconversion of beta-pyran and beta-furan forms of D-ribose. This chain is D-ribose pyranase, found in Bacillus cereus (strain 03BB102).